Reading from the N-terminus, the 554-residue chain is Phosphomethylpyrimidine synthase (554 aa).

Residues N188, M217, Y246, H282, 302–304 (SRG), 343–346 (DGLR), and E382 contribute to the substrate site. Zn(2+) is bound at residue H386. Position 409 (Y409) interacts with substrate. Residue H450 participates in Zn(2+) binding. [4Fe-4S] cluster is bound by residues C530, C533, and C538.

It belongs to the ThiC family. Homodimer. [4Fe-4S] cluster serves as cofactor.

The catalysed reaction is 5-amino-1-(5-phospho-beta-D-ribosyl)imidazole + S-adenosyl-L-methionine = 4-amino-2-methyl-5-(phosphooxymethyl)pyrimidine + CO + 5'-deoxyadenosine + formate + L-methionine + 3 H(+). Its pathway is cofactor biosynthesis; thiamine diphosphate biosynthesis. Catalyzes the synthesis of the hydroxymethylpyrimidine phosphate (HMP-P) moiety of thiamine from aminoimidazole ribotide (AIR) in a radical S-adenosyl-L-methionine (SAM)-dependent reaction. This Coxiella burnetii (strain CbuK_Q154) (Coxiella burnetii (strain Q154)) protein is Phosphomethylpyrimidine synthase.